The chain runs to 109 residues: SRA stem-loop-interacting RNA-binding protein, mitochondrial (109 aa).

Position 15 is a phosphoserine (S15). An RRM domain is found at 19–103 (PVAFVRRIPW…RRPKLPQTSD (85 aa)). T101 carries the post-translational modification Phosphothreonine. A Phosphoserine modification is found at S102.

The protein resides in the mitochondrion. The protein localises to the nucleus. RNA-binding protein that acts as a nuclear receptor corepressor. Probably acts by binding the SRA RNA, and repressing the SRA-mediated nuclear receptor coactivation. Binds the STR7 loop of SRA RNA. Also able to repress glucocorticoid (GR), androgen (AR), thyroid (TR) and VDR-mediated transactivation. The chain is SRA stem-loop-interacting RNA-binding protein, mitochondrial (SLIRP) from Pongo abelii (Sumatran orangutan).